We begin with the raw amino-acid sequence, 294 residues long: NADH-cytochrome b5 reductase 1 (294 aa).

A helical transmembrane segment spans residues 13–33 (PHASFLGGLVVAAILGLFIFF). An FAD-binding FR-type domain is found at 44-147 (VEWRSFKLVD…KGPKGKFVYT (104 aa)). FAD-binding positions include 127–142 (SLLT…GPKG) and 153–185 (HLVM…RLSL).

The protein belongs to the flavoprotein pyridine nucleotide cytochrome reductase family. In terms of assembly, monomer. Component of the 2-(3-amino-3-carboxypropyl)histidine synthase complex composed of DPH1, DPH2, DPH3 and a NADH-dependent reductase, predominantly CBR1. Requires FAD as cofactor.

It is found in the mitochondrion outer membrane. The enzyme catalyses 2 Fe(III)-[cytochrome b5] + NADH = 2 Fe(II)-[cytochrome b5] + NAD(+) + H(+). The catalysed reaction is 2 Fe(3+)-[Dph3] + NADH = 2 Fe(2+)-[Dph3] + NAD(+) + H(+). Its pathway is protein modification; peptidyl-diphthamide biosynthesis. Functionally, NADH-dependent reductase for DPH3 and cytochrome b5. Required for the first step of diphthamide biosynthesis, a post-translational modification of histidine which occurs in elongation factor 2. DPH1 and DPH2 transfer a 3-amino-3-carboxypropyl (ACP) group from S-adenosyl-L-methionine (SAM) to a histidine residue, the reaction is assisted by a reduction system comprising DPH3 and a NADH-dependent reductase, predominantly CBR1. By reducing DPH3, also involved in the formation of the tRNA wobble base modification mcm5s 2U (5-methoxycarbonylmethyl-2-thiouridine), mediated by the elongator complex. The cytochrome b5/NADH cytochrome b5 reductase electron transfer system supports the catalytic activity of several sterol biosynthetic enzymes. This chain is NADH-cytochrome b5 reductase 1 (CBR1), found in Cryptococcus neoformans var. neoformans serotype D (strain B-3501A) (Filobasidiella neoformans).